The primary structure comprises 274 residues: Thiamine kinase (274 aa).

It belongs to the thiamine kinase family.

The enzyme catalyses thiamine + ATP = thiamine phosphate + ADP + H(+). Its pathway is cofactor biosynthesis; thiamine diphosphate biosynthesis; thiamine phosphate from thiamine: step 1/1. In terms of biological role, catalyzes the ATP-dependent phosphorylation of thiamine to thiamine phosphate. Is involved in thiamine salvage. The chain is Thiamine kinase from Shigella boydii serotype 4 (strain Sb227).